The sequence spans 159 residues: SsrA-binding protein (159 aa).

Over residues 131–148 (YDKRQTLREKQDRREAER) the composition is skewed to basic and acidic residues. A disordered region spans residues 131-159 (YDKRQTLREKQDRREAERTISAIKRKQRA).

This sequence belongs to the SmpB family.

It is found in the cytoplasm. Required for rescue of stalled ribosomes mediated by trans-translation. Binds to transfer-messenger RNA (tmRNA), required for stable association of tmRNA with ribosomes. tmRNA and SmpB together mimic tRNA shape, replacing the anticodon stem-loop with SmpB. tmRNA is encoded by the ssrA gene; the 2 termini fold to resemble tRNA(Ala) and it encodes a 'tag peptide', a short internal open reading frame. During trans-translation Ala-aminoacylated tmRNA acts like a tRNA, entering the A-site of stalled ribosomes, displacing the stalled mRNA. The ribosome then switches to translate the ORF on the tmRNA; the nascent peptide is terminated with the 'tag peptide' encoded by the tmRNA and targeted for degradation. The ribosome is freed to recommence translation, which seems to be the essential function of trans-translation. The sequence is that of SsrA-binding protein from Streptomyces coelicolor (strain ATCC BAA-471 / A3(2) / M145).